The following is a 183-amino-acid chain: ATP synthase subunit delta (183 aa).

This sequence belongs to the ATPase delta chain family. As to quaternary structure, F-type ATPases have 2 components, F(1) - the catalytic core - and F(0) - the membrane proton channel. F(1) has five subunits: alpha(3), beta(3), gamma(1), delta(1), epsilon(1). F(0) has three main subunits: a(1), b(2) and c(10-14). The alpha and beta chains form an alternating ring which encloses part of the gamma chain. F(1) is attached to F(0) by a central stalk formed by the gamma and epsilon chains, while a peripheral stalk is formed by the delta and b chains.

The protein resides in the cell inner membrane. Its function is as follows. F(1)F(0) ATP synthase produces ATP from ADP in the presence of a proton or sodium gradient. F-type ATPases consist of two structural domains, F(1) containing the extramembraneous catalytic core and F(0) containing the membrane proton channel, linked together by a central stalk and a peripheral stalk. During catalysis, ATP synthesis in the catalytic domain of F(1) is coupled via a rotary mechanism of the central stalk subunits to proton translocation. In terms of biological role, this protein is part of the stalk that links CF(0) to CF(1). It either transmits conformational changes from CF(0) to CF(1) or is implicated in proton conduction. The chain is ATP synthase subunit delta from Desulfosudis oleivorans (strain DSM 6200 / JCM 39069 / Hxd3) (Desulfococcus oleovorans).